Consider the following 418-residue polypeptide: Tyrosine--tRNA ligase (418 aa).

Residue Tyr-34 coordinates L-tyrosine. Residues 39–48 (PTADSLHLGH) carry the 'HIGH' region motif. Residues Tyr-169 and Gln-173 each coordinate L-tyrosine. The 'KMSKS' region motif lies at 229 to 233 (KFGKS). Residue Lys-232 participates in ATP binding. An S4 RNA-binding domain is found at 352–410 (LNIVELLVTSGIVNSKRQAREDVQNGAIYVNGERVQDLDYTLSDSDKIDGELTVIRRGK).

The protein belongs to the class-I aminoacyl-tRNA synthetase family. TyrS type 1 subfamily. In terms of assembly, homodimer.

It localises to the cytoplasm. It carries out the reaction tRNA(Tyr) + L-tyrosine + ATP = L-tyrosyl-tRNA(Tyr) + AMP + diphosphate + H(+). Functionally, catalyzes the attachment of tyrosine to tRNA(Tyr) in a two-step reaction: tyrosine is first activated by ATP to form Tyr-AMP and then transferred to the acceptor end of tRNA(Tyr). This chain is Tyrosine--tRNA ligase, found in Streptococcus suis (strain 98HAH33).